A 218-amino-acid chain; its full sequence is MRSSDQLSARQRDILGFIEEFTQEHGYPPSIREIQDGLRISSTSVVAYNLRALESKGLIDRDGRVSRGIKIKNMTPMPLSRAQGGRVPLLGVITAGQPLPNPEDTSTTAVEMIEVPVDLAPPEKLQNVYALKVRGHSMIDALIDDGDIVLMRYQETADNGQMVAVRIEDDNAVTLKRFYREGDKVRLQPANVTMEPIYVDAARVHIQGRVVGVLRSMW.

The segment at residues 31-51 is a DNA-binding region (H-T-H motif); sequence IREIQDGLRISSTSVVAYNLR. Active-site for autocatalytic cleavage activity residues include Ser-137 and Lys-176.

Belongs to the peptidase S24 family. In terms of assembly, homodimer.

The catalysed reaction is Hydrolysis of Ala-|-Gly bond in repressor LexA.. Its function is as follows. Represses a number of genes involved in the response to DNA damage (SOS response), including recA and lexA. In the presence of single-stranded DNA, RecA interacts with LexA causing an autocatalytic cleavage which disrupts the DNA-binding part of LexA, leading to derepression of the SOS regulon and eventually DNA repair. In Roseiflexus sp. (strain RS-1), this protein is LexA repressor.